The chain runs to 205 residues: Suppressor of IKBKE 1 (205 aa).

Coiled coils occupy residues 4–32 (TIDK…LIDQ) and 154–192 (KAIQ…ESLR).

Belongs to the SIKE family. Interacts with IKBKE and TBK1 via its coiled coil region. Interaction with TBK1 is disrupted upon viral infection or TLR3 stimulation. Interacts with CDC42BPB. Associates with the STRIPAK core complex composed of PP2A catalytic and scaffolding subunits, the striatins (PP2A regulatory subunits), the striatin-associated proteins MOB4, STRIP1 and STRIP2, PDCD10 and members of the STE20 kinases, such as STK24 and STK26.

It localises to the cytoplasm. Suppressor of IKK-epsilon. Associates with the striatin-interacting phosphatase and kinase (STRIPAK) core complex, forming the extended (SIKE1:SLMAP)STRIPAK complex. The (SIKE1:SLMAP)STRIPAK complex dephosphorylates STK3 leading to the inhibition of Hippo signaling and the control of cell growth. This is Suppressor of IKBKE 1 (sike1) from Xenopus laevis (African clawed frog).